The following is a 323-amino-acid chain: tRNA U34 carboxymethyltransferase (323 aa).

Carboxy-S-adenosyl-L-methionine-binding positions include Lys91, Trp105, Lys110, Gly130, 152 to 154, 181 to 182, Met196, Tyr200, and Arg315; these read DPS and IE.

The protein belongs to the class I-like SAM-binding methyltransferase superfamily. CmoB family. As to quaternary structure, homotetramer.

It catalyses the reaction carboxy-S-adenosyl-L-methionine + 5-hydroxyuridine(34) in tRNA = 5-carboxymethoxyuridine(34) in tRNA + S-adenosyl-L-homocysteine + H(+). Its function is as follows. Catalyzes carboxymethyl transfer from carboxy-S-adenosyl-L-methionine (Cx-SAM) to 5-hydroxyuridine (ho5U) to form 5-carboxymethoxyuridine (cmo5U) at position 34 in tRNAs. The sequence is that of tRNA U34 carboxymethyltransferase from Vibrio parahaemolyticus serotype O3:K6 (strain RIMD 2210633).